We begin with the raw amino-acid sequence, 174 residues long: ATP-dependent protease subunit HslV (174 aa).

Residue Thr-2 is part of the active site. The Na(+) site is built by Ala-156, Cys-159, and Thr-162.

This sequence belongs to the peptidase T1B family. HslV subfamily. A double ring-shaped homohexamer of HslV is capped on each side by a ring-shaped HslU homohexamer. The assembly of the HslU/HslV complex is dependent on binding of ATP.

The protein localises to the cytoplasm. It carries out the reaction ATP-dependent cleavage of peptide bonds with broad specificity.. Allosterically activated by HslU binding. Functionally, protease subunit of a proteasome-like degradation complex believed to be a general protein degrading machinery. This is ATP-dependent protease subunit HslV from Agrobacterium fabrum (strain C58 / ATCC 33970) (Agrobacterium tumefaciens (strain C58)).